Consider the following 118-residue polypeptide: Non-specific lipid-transfer protein 2 (118 aa).

An N-terminal signal peptide occupies residues Met-1–Gly-25. Intrachain disulfides connect Cys-29–Cys-76, Cys-39–Cys-53, Cys-54–Cys-99, and Cys-74–Cys-113.

The protein belongs to the plant LTP family.

Functionally, plant non-specific lipid-transfer proteins transfer phospholipids as well as galactolipids across membranes. May play a role in wax or cutin deposition in the cell walls of expanding epidermal cells and certain secretory tissues. Binds saturated fatty acids, jasmonic acid and, with highest efficiency, unsaturated fatty acids and lysolipids. This chain is Non-specific lipid-transfer protein 2, found in Lens culinaris (Lentil).